A 110-amino-acid polypeptide reads, in one-letter code: DDFRNEFDRLLIHMTEEQFAKLEQALAHLSHQVTELEKSKSKELKAQILREISIGLDFIDSAKGHFERELKRADLNLAEKFNFESALSTGAVLHKDLTALATKVKAIETK.

Belongs to the mite group 5 allergen family.

The chain is Mite allergen Lep d 5 from Lepidoglyphus destructor (Storage mite).